The sequence spans 185 residues: Ribosome-recycling factor (185 aa).

It belongs to the RRF family.

It is found in the cytoplasm. Its function is as follows. Responsible for the release of ribosomes from messenger RNA at the termination of protein biosynthesis. May increase the efficiency of translation by recycling ribosomes from one round of translation to another. This Corynebacterium glutamicum (strain R) protein is Ribosome-recycling factor.